The sequence spans 179 residues: Pyridoxal 5'-phosphate synthase subunit PdxT (179 aa).

An L-glutamine-binding site is contributed by glycine 48–serine 50. Catalysis depends on cysteine 79, which acts as the Nucleophile. Residues arginine 101 and isoleucine 127–arginine 128 contribute to the L-glutamine site. Residues histidine 163 and glutamate 165 each act as charge relay system in the active site.

This sequence belongs to the glutaminase PdxT/SNO family. In terms of assembly, in the presence of PdxS, forms a dodecamer of heterodimers. Only shows activity in the heterodimer.

It carries out the reaction aldehydo-D-ribose 5-phosphate + D-glyceraldehyde 3-phosphate + L-glutamine = pyridoxal 5'-phosphate + L-glutamate + phosphate + 3 H2O + H(+). It catalyses the reaction L-glutamine + H2O = L-glutamate + NH4(+). The protein operates within cofactor biosynthesis; pyridoxal 5'-phosphate biosynthesis. In terms of biological role, catalyzes the hydrolysis of glutamine to glutamate and ammonia as part of the biosynthesis of pyridoxal 5'-phosphate. The resulting ammonia molecule is channeled to the active site of PdxS. The protein is Pyridoxal 5'-phosphate synthase subunit PdxT of Francisella tularensis subsp. novicida (strain U112).